A 415-amino-acid polypeptide reads, in one-letter code: Gamma-glutamyl phosphate reductase (415 aa).

This sequence belongs to the gamma-glutamyl phosphate reductase family.

It localises to the cytoplasm. The enzyme catalyses L-glutamate 5-semialdehyde + phosphate + NADP(+) = L-glutamyl 5-phosphate + NADPH + H(+). It participates in amino-acid biosynthesis; L-proline biosynthesis; L-glutamate 5-semialdehyde from L-glutamate: step 2/2. Functionally, catalyzes the NADPH-dependent reduction of L-glutamate 5-phosphate into L-glutamate 5-semialdehyde and phosphate. The product spontaneously undergoes cyclization to form 1-pyrroline-5-carboxylate. In Mycobacterium bovis (strain BCG / Pasteur 1173P2), this protein is Gamma-glutamyl phosphate reductase.